The following is a 206-amino-acid chain: Pyridoxine/pyridoxamine 5'-phosphate oxidase (206 aa).

Residues 53 to 58 (RMVLLK), 68 to 69 (YT), K75, and Q97 each bind FMN. K58 is a binding site for substrate. Residues Y115, R119, and S123 each coordinate substrate. Residues 132 to 133 (QS) and W177 contribute to the FMN site. 183–185 (RLH) is a substrate binding site. R187 is a binding site for FMN.

Belongs to the pyridoxamine 5'-phosphate oxidase family. As to quaternary structure, homodimer. FMN serves as cofactor.

It carries out the reaction pyridoxamine 5'-phosphate + O2 + H2O = pyridoxal 5'-phosphate + H2O2 + NH4(+). The catalysed reaction is pyridoxine 5'-phosphate + O2 = pyridoxal 5'-phosphate + H2O2. The protein operates within cofactor metabolism; pyridoxal 5'-phosphate salvage; pyridoxal 5'-phosphate from pyridoxamine 5'-phosphate: step 1/1. Its pathway is cofactor metabolism; pyridoxal 5'-phosphate salvage; pyridoxal 5'-phosphate from pyridoxine 5'-phosphate: step 1/1. Functionally, catalyzes the oxidation of either pyridoxine 5'-phosphate (PNP) or pyridoxamine 5'-phosphate (PMP) into pyridoxal 5'-phosphate (PLP). This chain is Pyridoxine/pyridoxamine 5'-phosphate oxidase, found in Rhizobium meliloti (strain 1021) (Ensifer meliloti).